A 407-amino-acid chain; its full sequence is 1-deoxy-D-xylulose 5-phosphate reductoisomerase (407 aa).

NADPH is bound by residues threonine 25, glycine 26, serine 27, isoleucine 28, asparagine 53, and asparagine 136. Lysine 137 lines the 1-deoxy-D-xylulose 5-phosphate pocket. An NADPH-binding site is contributed by glutamate 138. Residue aspartate 162 participates in Mn(2+) binding. 1-deoxy-D-xylulose 5-phosphate-binding residues include serine 163, glutamate 164, serine 188, and histidine 211. Residue glutamate 164 participates in Mn(2+) binding. Glycine 217 contributes to the NADPH binding site. 4 residues coordinate 1-deoxy-D-xylulose 5-phosphate: serine 224, asparagine 229, lysine 230, and glutamate 233. Glutamate 233 serves as a coordination point for Mn(2+).

This sequence belongs to the DXR family. Mg(2+) is required as a cofactor. Requires Mn(2+) as cofactor.

It carries out the reaction 2-C-methyl-D-erythritol 4-phosphate + NADP(+) = 1-deoxy-D-xylulose 5-phosphate + NADPH + H(+). It functions in the pathway isoprenoid biosynthesis; isopentenyl diphosphate biosynthesis via DXP pathway; isopentenyl diphosphate from 1-deoxy-D-xylulose 5-phosphate: step 1/6. Functionally, catalyzes the NADPH-dependent rearrangement and reduction of 1-deoxy-D-xylulose-5-phosphate (DXP) to 2-C-methyl-D-erythritol 4-phosphate (MEP). In Rhodopseudomonas palustris (strain BisB5), this protein is 1-deoxy-D-xylulose 5-phosphate reductoisomerase.